The primary structure comprises 130 residues: Small ribosomal subunit protein uS9 (130 aa).

It belongs to the universal ribosomal protein uS9 family.

The sequence is that of Small ribosomal subunit protein uS9 from Nitrosospira multiformis (strain ATCC 25196 / NCIMB 11849 / C 71).